Consider the following 451-residue polypeptide: DNA double-strand break repair nuclease NurA (451 aa).

Mn(2+)-binding residues include D51 and D126.

It belongs to the NurA family. Homodimer. Interacts with HerA. It depends on Mn(2+) as a cofactor.

Exonuclease activity is stimulated in the presence of HerA. Its function is as follows. Involved in DNA double-strand break (DSB) repair. Probably acts with HerA to stimulate resection of the 5' strand and produce the long 3' single-strand that is required for RadA loading. Exhibits 5' endonuclease activity and both 5' and 3' exonuclease activities. This chain is DNA double-strand break repair nuclease NurA, found in Pyrococcus furiosus (strain ATCC 43587 / DSM 3638 / JCM 8422 / Vc1).